Consider the following 259-residue polypeptide: Imidazole glycerol phosphate synthase subunit HisF (259 aa).

Active-site residues include D11 and D130.

It belongs to the HisA/HisF family. In terms of assembly, heterodimer of HisH and HisF.

The protein resides in the cytoplasm. The enzyme catalyses 5-[(5-phospho-1-deoxy-D-ribulos-1-ylimino)methylamino]-1-(5-phospho-beta-D-ribosyl)imidazole-4-carboxamide + L-glutamine = D-erythro-1-(imidazol-4-yl)glycerol 3-phosphate + 5-amino-1-(5-phospho-beta-D-ribosyl)imidazole-4-carboxamide + L-glutamate + H(+). It functions in the pathway amino-acid biosynthesis; L-histidine biosynthesis; L-histidine from 5-phospho-alpha-D-ribose 1-diphosphate: step 5/9. IGPS catalyzes the conversion of PRFAR and glutamine to IGP, AICAR and glutamate. The HisF subunit catalyzes the cyclization activity that produces IGP and AICAR from PRFAR using the ammonia provided by the HisH subunit. The chain is Imidazole glycerol phosphate synthase subunit HisF from Syntrophobacter fumaroxidans (strain DSM 10017 / MPOB).